Reading from the N-terminus, the 126-residue chain is Hydrogenase maturation factor HypA (126 aa).

His2 is a Ni(2+) binding site. The Zn(2+) site is built by Cys78, Cys81, Cys97, and Cys100.

It belongs to the HypA/HybF family.

Its function is as follows. Involved in the maturation of [NiFe] hydrogenases. Required for nickel insertion into the metal center of the hydrogenase. This chain is Hydrogenase maturation factor HypA, found in Methanococcus maripaludis (strain DSM 14266 / JCM 13030 / NBRC 101832 / S2 / LL).